A 266-amino-acid polypeptide reads, in one-letter code: Interleukin-1 beta (266 aa).

A propeptide spanning residues 1–114 (MAAVPELTSE…KTDADNFMSD (114 aa)) is cleaved from the precursor.

The protein belongs to the IL-1 family. In terms of assembly, monomer. In its precursor form, weakly interacts with full-length MEFV; the mature cytokine does not interact at all. Interacts with integrins ITGAV:ITGBV and ITGA5:ITGB1; integrin-binding is required for IL1B signaling. Interacts with cargo receptor TMED10; the interaction is direct and is required for the secretion of IL1B mature form. Interacts with HSP90AB1; the interaction facilitates cargo translocation into the ERGIC. Interacts with HSP90B1; the interaction facilitates cargo translocation into the ERGIC.

The protein localises to the cytoplasm. Its subcellular location is the cytosol. It is found in the secreted. It localises to the lysosome. The protein resides in the extracellular exosome. In terms of biological role, potent pro-inflammatory cytokine. Initially discovered as the major endogenous pyrogen, induces prostaglandin synthesis, neutrophil influx and activation, T-cell activation and cytokine production, B-cell activation and antibody production, and fibroblast proliferation and collagen production. Promotes Th17 differentiation of T-cells. Synergizes with IL12/interleukin-12 to induce IFNG synthesis from T-helper 1 (Th1) cells. Plays a role in angiogenesis by inducing VEGF production synergistically with TNF and IL6. Involved in transduction of inflammation downstream of pyroptosis: its mature form is specifically released in the extracellular milieu by passing through the gasdermin-D (GSDMD) pore. The sequence is that of Interleukin-1 beta (IL1B) from Canis lupus familiaris (Dog).